The chain runs to 601 residues: Jacalin-related lectin 3 (601 aa).

3 consecutive Jacalin-type lectin domains span residues 13-155 (PASL…HTQP), 240-382 (AKTY…HVME), and 438-583 (PSGP…HMQH).

Belongs to the jacalin lectin family.

In Arabidopsis thaliana (Mouse-ear cress), this protein is Jacalin-related lectin 3 (JAL3).